A 721-amino-acid polypeptide reads, in one-letter code: Kinesin-like protein KIF2C (721 aa).

Residues 1–250 (MESLHARLFP…CSPLTVTDPI (250 aa)) are globular. Phosphoserine is present on residues S3 and S19. S92 is modified (phosphoserine; by AURKB). The short motif at 95–98 (SKIP) is the Microtubule tip localization signal element. S106, S108, S112, S162, S171, S183, and S188 each carry phosphoserine. A disordered region spans residues 164 to 188 (EAEEQAHSTRSTSSANPGNSVRRKS). Residues 171-182 (STRSTSSANPGN) show a composition bias toward polar residues. The interval 203–234 (EKRAQNSELRIKRAQEYDSSFPNWEFARMIKE) is negative regulator of microtubule-binding. The 331-residue stretch at 254–584 (RICVCVRKRP…LRYADRVKEL (331 aa)) folds into the Kinesin motor domain. ATP contacts are provided by residues R260 and 344–351 (GQTGSGKT). A phosphoserine mark is found at S515 and S626. Residues 614-652 (GNEEEELSSQMSSFNEAMTQIRELEERALEELREIIQQG) adopt a coiled-coil conformation.

It belongs to the TRAFAC class myosin-kinesin ATPase superfamily. Kinesin family. MCAK/KIF2 subfamily. As to quaternary structure, interacts with CENPH. Interacts with MTUS2/TIP150; the interaction is direct. Interacts with MAPRE1; the interaction is direct, regulated by phosphorylation and is probably required for targeting to growing microtubule plus ends. Interacts with KIF18B at microtubule tips; this interaction increases the affinity of both partners for microtubule plus ends and is required for robust microtubule depolymerization. Phosphorylation by AURKA or AURKB strongly reduces KIF18B-binding. Phosphorylation by AURKB, regulates association with centromeres and kinetochores and the microtubule depolymerization activity. In terms of processing, ubiquitinated.

It localises to the cytoplasm. Its subcellular location is the cytoskeleton. It is found in the nucleus. The protein localises to the chromosome. The protein resides in the centromere. It localises to the kinetochore. In terms of biological role, in complex with KIF18B, constitutes the major microtubule plus-end depolymerizing activity in mitotic cells. Regulates the turnover of microtubules at the kinetochore and functions in chromosome segregation during mitosis. Plays a role in chromosome congression and is required for the lateral to end-on conversion of the chromosome-microtubule attachment. This Mus musculus (Mouse) protein is Kinesin-like protein KIF2C (Kif2c).